The chain runs to 87 residues: Co-chaperonin GroES (87 aa).

Belongs to the GroES chaperonin family. Heptamer of 7 subunits arranged in a ring. Interacts with the chaperonin GroEL.

Its subcellular location is the cytoplasm. Functionally, together with the chaperonin GroEL, plays an essential role in assisting protein folding. The GroEL-GroES system forms a nano-cage that allows encapsulation of the non-native substrate proteins and provides a physical environment optimized to promote and accelerate protein folding. GroES binds to the apical surface of the GroEL ring, thereby capping the opening of the GroEL channel. The polypeptide is Co-chaperonin GroES (Campylobacter hominis (strain ATCC BAA-381 / DSM 21671 / CCUG 45161 / LMG 19568 / NCTC 13146 / CH001A)).